The chain runs to 264 residues: 3-methyl-2-oxobutanoate hydroxymethyltransferase (264 aa).

Residues D45 and D84 each coordinate Mg(2+). Residues 45–46, D84, and K112 contribute to the 3-methyl-2-oxobutanoate site; that span reads DS. E114 is a binding site for Mg(2+). The active-site Proton acceptor is the E181.

Belongs to the PanB family. Homodecamer; pentamer of dimers. It depends on Mg(2+) as a cofactor.

Its subcellular location is the cytoplasm. It carries out the reaction 3-methyl-2-oxobutanoate + (6R)-5,10-methylene-5,6,7,8-tetrahydrofolate + H2O = 2-dehydropantoate + (6S)-5,6,7,8-tetrahydrofolate. It functions in the pathway cofactor biosynthesis; (R)-pantothenate biosynthesis; (R)-pantoate from 3-methyl-2-oxobutanoate: step 1/2. In terms of biological role, catalyzes the reversible reaction in which hydroxymethyl group from 5,10-methylenetetrahydrofolate is transferred onto alpha-ketoisovalerate to form ketopantoate. The polypeptide is 3-methyl-2-oxobutanoate hydroxymethyltransferase (Shewanella loihica (strain ATCC BAA-1088 / PV-4)).